The sequence spans 109 residues: Cysteine-rich venom protein 7 (109 aa).

A signal peptide spans 1–21 (MSKVFVIILVALMVAISIASA). Intrachain disulfides connect cysteine 30/cysteine 47, cysteine 37/cysteine 52, cysteine 46/cysteine 58, cysteine 70/cysteine 90, and cysteine 78/cysteine 98.

As to expression, expressed by the venom gland.

The protein resides in the secreted. This Pimpla hypochondriaca (Parasitoid wasp) protein is Cysteine-rich venom protein 7.